A 675-amino-acid polypeptide reads, in one-letter code: Metal-nicotianamine transporter YSL3 (675 aa).

14 helical membrane passes run 42–62 (ITFRGIVASLIIGIIYSVIVM), 66–86 (LTTGLVPNLNVSAALLAFVFL), 114–134 (CAVACYSIAVGGGFGSYLLGL), 159–179 (GIGWMTAFLFFTCFVGLLALV), 219–239 (VFGFVKYFSFSFIWAFFQWFF), 280–300 (IVNISLLFGAVLSWGIMWPLI), 325–345 (VFISISLILGDGLYQFIKILF), 386–406 (IPLWVAAVGYAAFSVVSIIAI), 408–428 (IMFPELKWYFIVVAYMLAPSL), 450–470 (VALFILAAMAGKQNGVVAGLV), 504–524 (VSQAIGTAIGCVVAPLTFFLF), 556–576 (FSALPQHCLQLCYGFFAFAVA), 602–622 (FLVGGYFAIDMCVGSLIVFAW), and 630–650 (AGLMVPAVASGLICGDGLWIL).

It belongs to the YSL (TC 2.A.67.2) family. Expressed in leaves, anthers and pollen grains. Restricted to the vasculature.

It localises to the membrane. Functionally, may be involved in the lateral transport of nicotianamine-chelated metals in the vasculature. In Arabidopsis thaliana (Mouse-ear cress), this protein is Metal-nicotianamine transporter YSL3 (YSL3).